The following is a 37-amino-acid chain: Cellular retinoic acid-binding protein 2 (37 aa).

A Nuclear localization signal motif is present at residues 21 to 31 (KALGVNMMLRK).

It belongs to the calycin superfamily. Fatty-acid binding protein (FABP) family. In terms of tissue distribution, embryo.

The protein resides in the cytoplasm. It localises to the endoplasmic reticulum. The protein localises to the nucleus. In terms of biological role, transports retinoic acid to the nucleus. Regulates the access of retinoic acid to the nuclear retinoic acid receptors. The polypeptide is Cellular retinoic acid-binding protein 2 (CRABP2) (Gallus gallus (Chicken)).